The chain runs to 443 residues: 23S rRNA (uracil(1939)-C(5))-methyltransferase RlmD (443 aa).

In terms of domain architecture, TRAM spans 8–66 (KPLPAEPIAAHIESFAHDGKGIAHVDGRVVFVDGALPGEDVTFVYTEIKRDYAAGRVVE). 4 residues coordinate [4Fe-4S] cluster: Cys79, Cys85, Cys88, and Cys167. Residues Gln276, Phe305, Asn310, Glu326, Asp353, and Asp374 each contribute to the S-adenosyl-L-methionine site. Catalysis depends on Cys400, which acts as the Nucleophile.

It belongs to the class I-like SAM-binding methyltransferase superfamily. RNA M5U methyltransferase family. RlmD subfamily.

It catalyses the reaction uridine(1939) in 23S rRNA + S-adenosyl-L-methionine = 5-methyluridine(1939) in 23S rRNA + S-adenosyl-L-homocysteine + H(+). Its function is as follows. Catalyzes the formation of 5-methyl-uridine at position 1939 (m5U1939) in 23S rRNA. This is 23S rRNA (uracil(1939)-C(5))-methyltransferase RlmD from Methylococcus capsulatus (strain ATCC 33009 / NCIMB 11132 / Bath).